The following is a 730-amino-acid chain: Elongation factor 2 (730 aa).

The tr-type G domain maps to 19–260 (EKIRNIGIVA…MVIRFLPNPL (242 aa)). Residues 28–35 (AHIDHGKT), 94–98 (DTPGH), and 148–151 (NKVD) contribute to the GTP site. Diphthamide is present on His596.

This sequence belongs to the TRAFAC class translation factor GTPase superfamily. Classic translation factor GTPase family. EF-G/EF-2 subfamily.

It is found in the cytoplasm. In terms of biological role, catalyzes the GTP-dependent ribosomal translocation step during translation elongation. During this step, the ribosome changes from the pre-translocational (PRE) to the post-translocational (POST) state as the newly formed A-site-bound peptidyl-tRNA and P-site-bound deacylated tRNA move to the P and E sites, respectively. Catalyzes the coordinated movement of the two tRNA molecules, the mRNA and conformational changes in the ribosome. The protein is Elongation factor 2 (fusA) of Methanosarcina thermophila.